Reading from the N-terminus, the 423-residue chain is Polyglutamylase complex subunit TTLL1 (423 aa).

Residues 1 to 367 enclose the TTL domain; it reads MAGRVKWVTD…NGEIPDCKWN (367 aa). Residues lysine 138, 144 to 145, 181 to 184, and 194 to 196 contribute to the ATP site; these read QG, SVYI, and KFD. Glutamine 144 contributes to the a protein binding site. Residue arginine 220 participates in L-glutamate binding. 241–242 lines the ATP pocket; sequence TN. L-glutamate is bound at residue lysine 259. Aspartate 313, glutamate 326, and asparagine 328 together coordinate Mg(2+). Residue lysine 344 participates in L-glutamate binding. The interval 390 to 423 is disordered; sequence DGAERELRNRPGQPVGPRAGRSRDSGRSVLTTWK.

It belongs to the tubulin polyglutamylase family. In terms of assembly, part of the neuronal tubulin polyglutamylase complex which contains TPGS1, TPGS2, TTLL1, LRRC49 and NICN1. Interacts with PCM1, CSTPP1 and LRRC49. Mg(2+) serves as cofactor. In terms of tissue distribution, highly expressed in brain, heart and kidney. Expressed in liver, lung, muscle, spleen, testis and trachea. In the brain, expressed in ependymal cilia, cortex, corpus callosum and striatum. Expressed in blastomere.

The protein resides in the cytoplasm. It is found in the cytoskeleton. Its subcellular location is the cilium basal body. It localises to the cilium axoneme. The protein localises to the cell projection. The protein resides in the cilium. It is found in the flagellum. The enzyme catalyses (L-glutamyl)(n)-gamma-L-glutamyl-L-glutamyl-[protein] + L-glutamate + ATP = (L-glutamyl)(n+1)-gamma-L-glutamyl-L-glutamyl-[protein] + ADP + phosphate + H(+). Its function is as follows. Catalytic subunit of a polyglutamylase complex which modifies tubulin, generating side chains of glutamate on the gamma-carboxyl group of specific glutamate residues within the C-terminal tail of tubulin. Probably involved in the side-chain elongation step of the polyglutamylation reaction rather than the initiation step. Modifies both alpha- and beta-tubulins with a preference for the alpha-tail. Unlike most polyglutamylases of the tubulin--tyrosine ligase family, only displays a catalytic activity when in complex with other proteins as it is most likely lacking domains important for autonomous activity. Part of the neuronal tubulin polyglutamylase complex. Mediates cilia and flagella polyglutamylation which is essential for their biogenesis and motility. Involved in respiratory motile cilia function through the regulation of beating asymmetry. Essential for sperm flagella biogenesis, motility and male fertility. Also mediates glutamylation of non-tubulin proteins. Involved in KLF4 glutamylation which impedes its ubiquitination, thereby leading to somatic cell reprogramming, pluripotency maintenance and embryogenesis. This chain is Polyglutamylase complex subunit TTLL1, found in Mus musculus (Mouse).